We begin with the raw amino-acid sequence, 509 residues long: Transmembrane protein 180 (509 aa).

At 1-10 (MGLRLLACLF) the chain is on the extracellular side. Residues 11–42 (HLPTAVIYGSLSLFVSILHNVFLLYYVDTFVS) form a helical membrane-spanning segment. Residues 43-54 (VYKIDKLSFWIG) are Cytoplasmic-facing. The chain crosses the membrane as a helical span at residues 55–73 (ETVFLIWNSLNDPLFGWLS). Topologically, residues 74–98 (DRVFLSTQQPGAEISSPEVVLKRLR) are extracellular. The chain crosses the membrane as a helical span at residues 99 to 116 (ALSHNGPLFAISFLAFWV). The Cytoplasmic portion of the chain corresponds to 117 to 124 (AWAHPGLQ). Residues 125–149 (FLLCLCMYDSFLTMVDLHHNALLAD) traverse the membrane as a helical segment. Topologically, residues 150 to 153 (LAVS) are extracellular. A helical transmembrane segment spans residues 154-177 (AKDRTSLNFYCSFFSAIGSLSVFM). The Cytoplasmic segment spans residues 178–189 (SYAVWNKEDFFS). The chain crosses the membrane as a helical span at residues 190 to 221 (FRIFCIVLAFCSIVGFTLSTQLLRQRFETDGK). The Extracellular portion of the chain corresponds to 222-259 (AKWDQESTLKELYIEKLSVPQEKRITLVEYLQQLSRHR). The helical transmembrane segment at 260–287 (NFLWFVCMNLIQVFHCHFNSNFFPLFLE) threads the bilayer. The Cytoplasmic segment spans residues 288-300 (HLLSDKISVSTGS). Residues 301–320 (FLLGISYIAPHLNNLYFLSL) form a helical membrane-spanning segment. The Extracellular segment spans residues 321–325 (CRRWG). The helical transmembrane segment at 326 to 345 (VYAVVRGLFFLKLALSVVML) threads the bilayer. Topologically, residues 346–353 (LAGPDQVY) are cytoplasmic. A helical transmembrane segment spans residues 354 to 388 (LLCIFIASNRVFTEGTCKLLNLVVTDLVDEDLVLN). Residues 389 to 397 (RRKQAASAL) lie on the Extracellular side of the membrane. Residues 398-424 (LFGMVALVTKPGQTFAPLIGTWLLCVY) form a helical membrane-spanning segment. Residues 425–458 (TGYDIFQRNPLSNVVSAQPKLESDTILEPTLRQG) are Cytoplasmic-facing. The chain crosses the membrane as a helical span at residues 459 to 477 (CFYLLVFVPITCALLQLLS). Over 478–509 (WTQFSLHGKRLQMVKAQRQGLMQGRAPEIKMI) the chain is Extracellular.

Its subcellular location is the cell membrane. The protein is Transmembrane protein 180 of Gallus gallus (Chicken).